A 304-amino-acid chain; its full sequence is MKTFLVFALIAVVATSAIAQMETSCISGLERPWQQQPLPPQQSFSQQPPFSQQQQQPLPQQPSFSQQQPPFSQQQPILSQQPPFSQQQQPVLPQQSPFSQQQQLVLPPQQQQQQLVQQQIPIVQPSVLQQLNPCKVFLQQQCSPVAMPQRLARSQMWQQSSCHVMQQQCCQQLQQIPEQSRYEAIRAIIYSIILQEQQQGFVQPQQQQPQQSGQGVSQSQQQSQQQLGQCSFQQPQQQLGQQPQQQQQQQVLQGTFLQPHQIAHLEAVTSIALRTLPTMCSVNVPLYSATTSVPFGVGTGVGAY.

The N-terminal stretch at 1 to 23 (MKTFLVFALIAVVATSAIAQMET) is a signal peptide. Positions 32 to 92 (PWQQQPLPPQ…PFSQQQQPVL (61 aa)) are disordered. Residues 41 to 92 (QQSFSQQPPFSQQQQQPLPQQPSFSQQQPPFSQQQPILSQQPPFSQQQQPVL) are compositionally biased toward low complexity.

Belongs to the gliadin/glutenin family.

In terms of biological role, gliadin is the major seed storage protein in wheat. The polypeptide is Gamma-gliadin B-I (Triticum aestivum (Wheat)).